The primary structure comprises 346 residues: tRNA(Ile)-lysidine synthase (346 aa).

Residue 32-37 (SGGPDS) coordinates ATP.

This sequence belongs to the tRNA(Ile)-lysidine synthase family.

Its subcellular location is the cytoplasm. It catalyses the reaction cytidine(34) in tRNA(Ile2) + L-lysine + ATP = lysidine(34) in tRNA(Ile2) + AMP + diphosphate + H(+). In terms of biological role, ligates lysine onto the cytidine present at position 34 of the AUA codon-specific tRNA(Ile) that contains the anticodon CAU, in an ATP-dependent manner. Cytidine is converted to lysidine, thus changing the amino acid specificity of the tRNA from methionine to isoleucine. The chain is tRNA(Ile)-lysidine synthase from Rhodopseudomonas palustris (strain ATCC BAA-98 / CGA009).